Reading from the N-terminus, the 241-residue chain is NAD-dependent protein deacylase (241 aa).

One can recognise a Deacetylase sirtuin-type domain in the interval 1-237; it reads MNFPYRNIVV…PKLVDEILAL (237 aa). NAD(+) is bound at residue 13–32; sequence GAGISAESGIQTFRAQDGLW. Tyrosine 57 and arginine 60 together coordinate substrate. Residue 94-97 participates in NAD(+) binding; it reads QNID. Histidine 112 (proton acceptor) is an active-site residue. Zn(2+) is bound by residues cysteine 120 and cysteine 139. NAD(+)-binding positions include 179–181, 205–207, and alanine 223; these read GTS and NLE.

The protein belongs to the sirtuin family. Class III subfamily. As to quaternary structure, monomer. Requires Zn(2+) as cofactor.

Its subcellular location is the cytoplasm. It is found in the host cytoplasm. It localises to the host cytosol. The protein resides in the host nucleus. The catalysed reaction is N(6)-acetyl-L-lysyl-[protein] + NAD(+) + H2O = 2''-O-acetyl-ADP-D-ribose + nicotinamide + L-lysyl-[protein]. It catalyses the reaction N(6)-succinyl-L-lysyl-[protein] + NAD(+) + H2O = 2''-O-succinyl-ADP-D-ribose + nicotinamide + L-lysyl-[protein]. Its function is as follows. NAD-dependent lysine deacetylase and desuccinylase that specifically removes acetyl and succinyl groups on target proteins. Modulates the activities of several proteins which are inactive in their acylated form. In the intracellular pathogen V.parahaemolyticus, this enzyme regulates host response during infection by induction of host histone deacetylation; it specifically causes deacetylation of histone lysine residues H3K56, H3K9, H3K18 and H4K16 which results in transcriptional repression of several host genes involved in epigenetic regulation, immune response, and autophagy. The protein is NAD-dependent protein deacylase of Vibrio parahaemolyticus serotype O3:K6 (strain RIMD 2210633).